The sequence spans 954 residues: Glycine dehydrogenase (decarboxylating) (954 aa).

N6-(pyridoxal phosphate)lysine is present on Lys-699.

This sequence belongs to the GcvP family. As to quaternary structure, the glycine cleavage system is composed of four proteins: P, T, L and H. It depends on pyridoxal 5'-phosphate as a cofactor.

It catalyses the reaction N(6)-[(R)-lipoyl]-L-lysyl-[glycine-cleavage complex H protein] + glycine + H(+) = N(6)-[(R)-S(8)-aminomethyldihydrolipoyl]-L-lysyl-[glycine-cleavage complex H protein] + CO2. Functionally, the glycine cleavage system catalyzes the degradation of glycine. The P protein binds the alpha-amino group of glycine through its pyridoxal phosphate cofactor; CO(2) is released and the remaining methylamine moiety is then transferred to the lipoamide cofactor of the H protein. The polypeptide is Glycine dehydrogenase (decarboxylating) (Nitrobacter winogradskyi (strain ATCC 25391 / DSM 10237 / CIP 104748 / NCIMB 11846 / Nb-255)).